Reading from the N-terminus, the 76-residue chain is U-scoloptoxin(13)-Sa1a (76 aa).

The signal sequence occupies residues M1 to A22.

Belongs to the scoloptoxin-13 family. Contains 4 disulfide bonds. In terms of tissue distribution, expressed by the venom gland.

It is found in the secreted. The sequence is that of U-scoloptoxin(13)-Sa1a from Scolopendra alternans (Florida Keys giant centipede).